A 352-amino-acid polypeptide reads, in one-letter code: DNA-directed RNA polymerase subunit alpha (352 aa).

The tract at residues 1–236 (MTVNIRNWQE…DQLQVFVHFE (236 aa)) is alpha N-terminal domain (alpha-NTD). Positions 257–352 (SDVNQLNRFL…AKKLEQELLG (96 aa)) are alpha C-terminal domain (alpha-CTD).

It belongs to the RNA polymerase alpha chain family. In terms of assembly, homodimer. The RNAP catalytic core consists of 2 alpha, 1 beta, 1 beta' and 1 omega subunit. When a sigma factor is associated with the core the holoenzyme is formed, which can initiate transcription.

The catalysed reaction is RNA(n) + a ribonucleoside 5'-triphosphate = RNA(n+1) + diphosphate. In terms of biological role, DNA-dependent RNA polymerase catalyzes the transcription of DNA into RNA using the four ribonucleoside triphosphates as substrates. This Sphingopyxis alaskensis (strain DSM 13593 / LMG 18877 / RB2256) (Sphingomonas alaskensis) protein is DNA-directed RNA polymerase subunit alpha.